The chain runs to 634 residues: DNA-directed RNA polymerase subunit gamma (634 aa).

Zn(2+) contacts are provided by Cys-74, Cys-76, Cys-89, and Cys-92. Mg(2+) is bound by residues Asp-471, Asp-473, and Asp-475.

The protein belongs to the RNA polymerase beta' chain family. RpoC1 subfamily. As to quaternary structure, in cyanobacteria the RNAP catalytic core is composed of 2 alpha, 1 beta, 1 beta', 1 gamma and 1 omega subunit. When a sigma factor is associated with the core the holoenzyme is formed, which can initiate transcription. It depends on Mg(2+) as a cofactor. Zn(2+) is required as a cofactor.

The enzyme catalyses RNA(n) + a ribonucleoside 5'-triphosphate = RNA(n+1) + diphosphate. Its function is as follows. DNA-dependent RNA polymerase catalyzes the transcription of DNA into RNA using the four ribonucleoside triphosphates as substrates. This chain is DNA-directed RNA polymerase subunit gamma, found in Prochlorococcus marinus (strain MIT 9312).